We begin with the raw amino-acid sequence, 747 residues long: Zinc finger and BTB domain-containing protein 47 (747 aa).

In terms of domain architecture, BTB spans 15-83 (CDVDLVLVPQ…IYTSKLLVNA (69 aa)). Residue K190 forms a Glycyl lysine isopeptide (Lys-Gly) (interchain with G-Cter in SUMO2) linkage. Residues 243-424 (QTLHVSTGPE…ARGPPATDGL (182 aa)) are disordered. Positions 267-277 (GREDGLQRHSD) are enriched in basic and acidic residues. The segment covering 278–354 (EEEEDDEEEE…SEEEEGEEGE (77 aa)) has biased composition (acidic residues). Residues 380-398 (RSRENARRRGTPEPEEAGR) show a composition bias toward basic and acidic residues. The C2H2-type 1 zinc-finger motif lies at 436–459 (HPCQKCPRVFNNRWYLEKHMNVTH). The C2H2-type 2; degenerate zinc-finger motif lies at 463 to 485 (QICDQCGKRFLLESELLLHRQTD). 7 consecutive C2H2-type zinc fingers follow at residues 490–513 (IQCV…KIVH), 520–542 (FSCE…MVAH), 548–570 (FTCE…SLQH), 576–598 (FRCE…MSIH), 604–626 (FMCQ…MKTH), 632–654 (YICE…RRTH), and 660–687 (YPCD…RVSH). Residues 694-747 (VPAAPGLPPTQPQAHALPLLPGLPQTLPPPPHLPPPPPLFPTTASPGGRMNANN) form a disordered region. Residues 719 to 733 (TLPPPPHLPPPPPLF) show a composition bias toward pro residues.

This sequence belongs to the krueppel C2H2-type zinc-finger protein family.

Its subcellular location is the nucleus. Functionally, may be involved in transcriptional regulation. The protein is Zinc finger and BTB domain-containing protein 47 (ZBTB47) of Homo sapiens (Human).